Consider the following 126-residue polypeptide: DNA-directed RNA polymerase I subunit RPA12 (126 aa).

Zn(2+) contacts are provided by cysteine 20, cysteine 23, cysteine 38, cysteine 41, cysteine 87, and cysteine 90. The C4-type zinc finger occupies 20–41 (CSDCGSVLPLPGAQDTVTCTRC). A TFIIS-type zinc finger spans residues 83–123 (VDRRCPRCGHEGMAYHTRQMRSADEGQTVFYTCTNCKFQEK). Residues 106 to 107 (DE) carry the Hairpin motif. Cysteine 115 and cysteine 118 together coordinate Zn(2+).

The protein belongs to the archaeal RpoM/eukaryotic RPA12/RPB9/RPC11 RNA polymerase family. In terms of assembly, component of the RNA polymerase I (Pol I) complex consisting of 13 subunits: a ten-subunit catalytic core composed of POLR1A/RPA1, POLR1B/RPA2, POLR1C/RPAC1, POLR1D/RPAC2, POLR1H/RPA12, POLR2E/RPABC1, POLR2F/RPABC2, POLR2H/RPABC3, POLR2K/RPABC4 and POLR2L/RPABC5; a mobile stalk subunit POLR1F/RPA43 protruding from the core and additional subunits homologous to general transcription factors POLR1E/RPA49 and POLR1G/RPA34. Part of Pol I pre-initiation complex (PIC), in which Pol I core assembles with RRN3 and promoter-bound UTBF and SL1/TIF-IB complex.

The protein localises to the nucleus. The protein resides in the nucleolus. In terms of biological role, core component of RNA polymerase I (Pol I), a DNA-dependent RNA polymerase which synthesizes ribosomal RNA precursors using the four ribonucleoside triphosphates as substrates. Can mediate Pol I proofreading of the nascent RNA transcript. Anchors into the Pol I active site to monitor transcription fidelity and cleave mis-incorporated 5'-ribonucleotides. The chain is DNA-directed RNA polymerase I subunit RPA12 from Macaca mulatta (Rhesus macaque).